Reading from the N-terminus, the 1016-residue chain is MPNSIWTSSDARAIHARMKKGDHLFLVDGSGFIFRAFHALPPLTRKTDGLPIGAVSGFCNMLWKLLRDARNTDVGVTPTHLAVIFDYSAKTFRKDLYDAYKANRSAPPEELIPQFGLIREATRAFNLPCIETEGFEADDIIATYARQAEATGADVTIVSSDKDLMQLVSPNVHMYDSMKDKQIGIPDVIEKWGVPPEKMIDLQAMTGDSVDNVPGIPGIGPKTAAQLLEEYGDLDTLLERATEIKQVKRRETILANIDMARLSRDLVRLRTDVPLDLDLDALVLEPQNGPKLIGFLKTMEFTTLTRRVAEACDCDASAIEPAIVRIEWGETARGPDLDAAEPEPVAGGIPEVSGESVPMPPRAKAKSAVEGAFSPADLAKARAEAFATLPFDHSAYVTIRDLVTLDRWIADARATGLVAFDTETTSLDAMQAELVGFSLAIADNTADPTGTKIRAAYVPLVHKNGVGDLLGGGLADNQIPMRDALPRLKALLEDESVLKVAQNLKYDYLLLKRYGIETRSFDDTMLISYVLDAGTGAHGMDPLSEKFLGHTPIPYKDVAGSGKANVTFDLVDIDRATHYAAEDADVTLRLWLVLKPRLAAAGLTSVYERLERPLLPVLARMEARGITVDRQILSRLSGELAQGAARLEDEIYVLAGERFNIGSPKQLGDILFGKMGLSGGSKTKTGQWSTSAQVLEDLAAAGFELPRKIVDWRQVTKLKSTYTDALPGYVHPETKRVHTSYSLASTTTGRLSSSEPNLQNIPVRTAEGRKIRTAFISTPGHKLISADYSQIELRVLAHVAEIPQLTKAFEDGVDIHAMTASEMFGVPVEGMPGEVRRRAKAINFGIIYGISAFGLANQLSIERSEAGDYIKKYFERFPGIRDYMESRKAMARDKGYVETIFGRRINYPEIRSSNPSVRAFNERAAINAPIQGSAADVIRRAMIKIEPALVEVGLADRVRMLLQVHDELIFEVEDQDVEKAMPVIVSVMENATMPALEMRVPLRVDARAATNWDEAH.

The 5'-3' exonuclease domain maps to 1 to 308; that stretch reads MPNSIWTSSD…MEFTTLTRRV (308 aa). The segment at 334-361 is disordered; that stretch reads GPDLDAAEPEPVAGGIPEVSGESVPMPP. Residues 394–630 enclose the 3'-5' exonuclease domain; it reads SAYVTIRDLV…MEARGITVDR (237 aa). The interval 768–1016 is polymerase; it reads GRKIRTAFIS…RAATNWDEAH (249 aa).

Belongs to the DNA polymerase type-A family. In terms of assembly, single-chain monomer with multiple functions.

It carries out the reaction DNA(n) + a 2'-deoxyribonucleoside 5'-triphosphate = DNA(n+1) + diphosphate. Its function is as follows. In addition to polymerase activity, this DNA polymerase exhibits 3'-5' and 5'-3' exonuclease activity. In Rhizobium leguminosarum, this protein is DNA polymerase I (polA).